Reading from the N-terminus, the 595-residue chain is Isoprene synthase, chloroplastic (595 aa).

A chloroplast-targeting transit peptide spans 1-37 (MATELLCLHRPISLTHKLFRNPLPKVIQATPLTLKLR). Aspartate 345 contributes to the dimethylallyl diphosphate binding site. The Mg(2+) site is built by aspartate 345 and aspartate 349. The DDXXD motif motif lies at 345 to 349 (DDIYD). Glutamate 423, arginine 486, and asparagine 489 together coordinate dimethylallyl diphosphate. 3 residues coordinate Mg(2+): asparagine 489, serine 493, and glutamate 497.

The protein belongs to the terpene synthase family. Tpsb subfamily. Requires Mg(2+) as cofactor. In terms of tissue distribution, predominantly expressed in leaves.

It is found in the plastid. Its subcellular location is the chloroplast. The enzyme catalyses dimethylallyl diphosphate = isoprene + diphosphate. The protein operates within terpene metabolism. Lyase that catalyzes the formation of isoprene from dimethylallyl diphosphate, but not from isopentenyl diphosphate or geranyl diphosphate. The protein is Isoprene synthase, chloroplastic of Populus alba (White poplar).